The chain runs to 316 residues: Zinc finger protein 367 (316 aa).

Residues 61-97 (VTLGPGSGSGAASPTRTSSSPAEADPLSCPEHLKDGI) are disordered. The span at 70-82 (GAASPTRTSSSPA) shows a compositional bias: low complexity. C2H2-type zinc fingers lie at residues 121 to 143 (IRCN…KRTH) and 149 to 173 (YLCD…QRLH). The interval 234-294 (QTREQRSPVP…GGVVTARRRL (61 aa)) is disordered. Acidic residues predominate over residues 255 to 278 (EDQEQQDPLDFLPSDEGEEEEQEE). Residues 289–313 (TARRRLQEQRERLHGALALIELANN) adopt a coiled-coil conformation.

This sequence belongs to the krueppel C2H2-type zinc-finger protein family.

The protein resides in the nucleus. Functionally, transcriptional activator. This chain is Zinc finger protein 367 (znf367), found in Danio rerio (Zebrafish).